The following is a 157-amino-acid chain: 2-C-methyl-D-erythritol 2,4-cyclodiphosphate synthase (157 aa).

A divalent metal cation contacts are provided by Asp8 and His10. Residues 8–10 (DVH) and 34–35 (HS) contribute to the 4-CDP-2-C-methyl-D-erythritol 2-phosphate site. His42 contributes to the a divalent metal cation binding site. 4-CDP-2-C-methyl-D-erythritol 2-phosphate is bound by residues 56–58 (DIG), 61–65 (FPDTD), 100–106 (AQAPKML), 132–135 (TTTE), Phe139, and Arg142.

Belongs to the IspF family. Homotrimer. The cofactor is a divalent metal cation.

It catalyses the reaction 4-CDP-2-C-methyl-D-erythritol 2-phosphate = 2-C-methyl-D-erythritol 2,4-cyclic diphosphate + CMP. It participates in isoprenoid biosynthesis; isopentenyl diphosphate biosynthesis via DXP pathway; isopentenyl diphosphate from 1-deoxy-D-xylulose 5-phosphate: step 4/6. Involved in the biosynthesis of isopentenyl diphosphate (IPP) and dimethylallyl diphosphate (DMAPP), two major building blocks of isoprenoid compounds. Catalyzes the conversion of 4-diphosphocytidyl-2-C-methyl-D-erythritol 2-phosphate (CDP-ME2P) to 2-C-methyl-D-erythritol 2,4-cyclodiphosphate (ME-CPP) with a corresponding release of cytidine 5-monophosphate (CMP). This chain is 2-C-methyl-D-erythritol 2,4-cyclodiphosphate synthase, found in Photorhabdus laumondii subsp. laumondii (strain DSM 15139 / CIP 105565 / TT01) (Photorhabdus luminescens subsp. laumondii).